The primary structure comprises 491 residues: Probable glycine dehydrogenase (decarboxylating) subunit 2 (491 aa).

K274 carries the post-translational modification N6-(pyridoxal phosphate)lysine.

The protein belongs to the GcvP family. C-terminal subunit subfamily. The glycine cleavage system is composed of four proteins: P, T, L and H. In this organism, the P 'protein' is a heterodimer of two subunits. The cofactor is pyridoxal 5'-phosphate.

The enzyme catalyses N(6)-[(R)-lipoyl]-L-lysyl-[glycine-cleavage complex H protein] + glycine + H(+) = N(6)-[(R)-S(8)-aminomethyldihydrolipoyl]-L-lysyl-[glycine-cleavage complex H protein] + CO2. Functionally, the glycine cleavage system catalyzes the degradation of glycine. The P protein binds the alpha-amino group of glycine through its pyridoxal phosphate cofactor; CO(2) is released and the remaining methylamine moiety is then transferred to the lipoamide cofactor of the H protein. In Shouchella clausii (strain KSM-K16) (Alkalihalobacillus clausii), this protein is Probable glycine dehydrogenase (decarboxylating) subunit 2.